The sequence spans 78 residues: Large ribosomal subunit protein bL28 (78 aa).

Residues 1-21 form a disordered region; the sequence is MSKVCQVTGKRPITGHNVSHA.

It belongs to the bacterial ribosomal protein bL28 family.

In Cellvibrio japonicus (strain Ueda107) (Pseudomonas fluorescens subsp. cellulosa), this protein is Large ribosomal subunit protein bL28.